We begin with the raw amino-acid sequence, 353 residues long: E3 ubiquitin-protein ligase TRIM63 (353 aa).

The segment at 23–79 (CPICLEMFTKPVVILPCQHNLCRKCANDIFQAANPYWTSRGSSVSMSGGRFRCPTCR) adopts an RING-type zinc-finger fold. Residues 74–218 (RCPTCRHEVI…LSQKFDTLYA (145 aa)) are interaction with TTN. The B box-type zinc-finger motif lies at 117-159 (GSHPMCKEHEDEKINIYCLTCEVPTCSMCKVFGIHKACEVAPL). Zn(2+) contacts are provided by Cys122, His125, Cys145, and His151. The stretch at 207–269 (EELSQKFDTL…VETAIQSLDE (63 aa)) forms a coiled coil. A COS domain is found at 267–325 (LDEPGGATFLLTAKQLIKSIVEASKGCQLGKTEQGFENMDFFTLDLEHIADALRAIDFG). Residues 326 to 344 (TDEEEEEFIEEEDQEEEES) show a composition bias toward acidic residues. Residues 326–353 (TDEEEEEFIEEEDQEEEESTEGKEEGHQ) form a disordered region.

As to quaternary structure, homodimer. Homooligomer and heterooligomer. Interacts with SUMO2, titin/TTN and GMEB1. Interacts with TRIM54 and probably with TRIM55 and TNNI3. Forms a ternary complex with RACK1 and PRKCE. Interacts with CKM. In terms of tissue distribution, muscle specific. Selectively expressed in heart and skeletal muscle. Also expressed in the iris.

The protein resides in the cytoplasm. Its subcellular location is the nucleus. The protein localises to the myofibril. It is found in the sarcomere. It localises to the m line. The protein resides in the z line. The enzyme catalyses S-ubiquitinyl-[E2 ubiquitin-conjugating enzyme]-L-cysteine + [acceptor protein]-L-lysine = [E2 ubiquitin-conjugating enzyme]-L-cysteine + N(6)-ubiquitinyl-[acceptor protein]-L-lysine.. It participates in protein modification; protein ubiquitination. Functionally, E3 ubiquitin ligase. Mediates the ubiquitination and subsequent proteasomal degradation of CKM, GMEB1 and HIBADH. Regulates the proteasomal degradation of muscle proteins under amino acid starvation, where muscle protein is catabolized to provide other organs with amino acids. Inhibits de novo skeletal muscle protein synthesis under amino acid starvation. Regulates proteasomal degradation of cardiac troponin I/TNNI3 and probably of other sarcomeric-associated proteins. May play a role in striated muscle atrophy and hypertrophy by regulating an anti-hypertrophic PKC-mediated signaling pathway. May regulate the organization of myofibrils through TTN in muscle cells. In Homo sapiens (Human), this protein is E3 ubiquitin-protein ligase TRIM63 (TRIM63).